The primary structure comprises 136 residues: uncharacterized protein (136 aa).

This is an uncharacterized protein from Methanocaldococcus jannaschii (strain ATCC 43067 / DSM 2661 / JAL-1 / JCM 10045 / NBRC 100440) (Methanococcus jannaschii).